The following is a 352-amino-acid chain: GTPase Obg (352 aa).

Positions 1 to 159 (MQFIDQAEIQ…RMLRLELKLL (159 aa)) constitute an Obg domain. The 171-residue stretch at 160-330 (AEVGIIGLPN…LMQEIWGLLE (171 aa)) folds into the OBG-type G domain. GTP-binding positions include 166–173 (GLPNAGKS), 191–195 (FTTLV), 213–216 (DIPG), 280–283 (NKVD), and 311–313 (SAV). 2 residues coordinate Mg(2+): serine 173 and threonine 193.

This sequence belongs to the TRAFAC class OBG-HflX-like GTPase superfamily. OBG GTPase family. In terms of assembly, monomer. The cofactor is Mg(2+).

Its subcellular location is the cytoplasm. Functionally, an essential GTPase which binds GTP, GDP and possibly (p)ppGpp with moderate affinity, with high nucleotide exchange rates and a fairly low GTP hydrolysis rate. Plays a role in control of the cell cycle, stress response, ribosome biogenesis and in those bacteria that undergo differentiation, in morphogenesis control. This is GTPase Obg from Trichodesmium erythraeum (strain IMS101).